The chain runs to 710 residues: WD repeat-containing protein CG11141 (710 aa).

WD repeat units follow at residues 31-70 (FFPA…MQKL) and 133-172 (LHKC…HLSK). Positions 283-307 (LNPKQRSEPSGTHHTSASTSSTRHS) are disordered. Residues 292–307 (SGTHHTSASTSSTRHS) show a composition bias toward low complexity. A Phosphothreonine modification is found at Thr488. Ser553 carries the phosphoserine modification. 2 disordered regions span residues 612 to 635 (ASIQ…GEPV) and 685 to 710 (DPLA…FLDN). Polar residues-rich tracts occupy residues 613–624 (SIQTSSRENATN) and 694–704 (PATSDSNTSSE).

The protein belongs to the WD repeat KIAA0329 family.

This Drosophila melanogaster (Fruit fly) protein is WD repeat-containing protein CG11141.